The chain runs to 84 residues: Sec-independent protein translocase protein TatA (84 aa).

The helical transmembrane segment at 4–24 (MSPVHWLILAVVLLVVFGGGG) threads the bilayer. The segment at 46–84 (DDESMTATDATQAPGHISPPNQNPGYSQTTSSETHRNQV) is disordered. Positions 64-77 (PPNQNPGYSQTTSS) are enriched in polar residues.

This sequence belongs to the TatA/E family. In terms of assembly, the Tat system comprises two distinct complexes: a TatABC complex, containing multiple copies of TatA, TatB and TatC subunits, and a separate TatA complex, containing only TatA subunits. Substrates initially bind to the TatABC complex, which probably triggers association of the separate TatA complex to form the active translocon.

The protein resides in the cell inner membrane. Part of the twin-arginine translocation (Tat) system that transports large folded proteins containing a characteristic twin-arginine motif in their signal peptide across membranes. TatA could form the protein-conducting channel of the Tat system. The chain is Sec-independent protein translocase protein TatA from Gluconobacter oxydans (strain 621H) (Gluconobacter suboxydans).